A 428-amino-acid chain; its full sequence is Enolase 1 (428 aa).

Position 167 (Gln-167) interacts with (2R)-2-phosphoglycerate. Glu-209 functions as the Proton donor in the catalytic mechanism. Mg(2+) contacts are provided by Asp-246, Glu-288, and Asp-315. (2R)-2-phosphoglycerate contacts are provided by Lys-340, Arg-369, Ser-370, and Lys-391. Residue Lys-340 is the Proton acceptor of the active site.

The protein belongs to the enolase family. Component of the RNA degradosome, a multiprotein complex involved in RNA processing and mRNA degradation. Requires Mg(2+) as cofactor.

The protein localises to the cytoplasm. The protein resides in the secreted. It is found in the cell surface. It catalyses the reaction (2R)-2-phosphoglycerate = phosphoenolpyruvate + H2O. The protein operates within carbohydrate degradation; glycolysis; pyruvate from D-glyceraldehyde 3-phosphate: step 4/5. Catalyzes the reversible conversion of 2-phosphoglycerate (2-PG) into phosphoenolpyruvate (PEP). It is essential for the degradation of carbohydrates via glycolysis. The protein is Enolase 1 of Pseudomonas syringae pv. tomato (strain ATCC BAA-871 / DC3000).